The following is a 307-amino-acid chain: Ornithine carbamoyltransferase (307 aa).

Carbamoyl phosphate is bound by residues 51–54 (STRT), glutamine 78, arginine 102, and 129–132 (HPCQ). L-ornithine is bound by residues asparagine 160, aspartate 220, and 224–225 (SM). Residues 260-261 (CL) and arginine 288 each bind carbamoyl phosphate.

This sequence belongs to the aspartate/ornithine carbamoyltransferase superfamily. OTCase family.

It is found in the cytoplasm. It catalyses the reaction carbamoyl phosphate + L-ornithine = L-citrulline + phosphate + H(+). Its pathway is amino-acid biosynthesis; L-arginine biosynthesis; L-arginine from L-ornithine and carbamoyl phosphate: step 1/3. In terms of biological role, reversibly catalyzes the transfer of the carbamoyl group from carbamoyl phosphate (CP) to the N(epsilon) atom of ornithine (ORN) to produce L-citrulline. This is Ornithine carbamoyltransferase (argF) from Archaeoglobus fulgidus (strain ATCC 49558 / DSM 4304 / JCM 9628 / NBRC 100126 / VC-16).